Consider the following 316-residue polypeptide: tRNA dimethylallyltransferase (316 aa).

ATP is bound at residue 17–24 (GPTASGKT). Position 19–24 (19–24 (TASGKT)) interacts with substrate. 4 interaction with substrate tRNA regions span residues 42-45 (DSVL), 166-170 (QRLSR), 247-252 (RCVGYR), and 280-287 (KRQITWLR).

The protein belongs to the IPP transferase family. As to quaternary structure, monomer. The cofactor is Mg(2+).

The enzyme catalyses adenosine(37) in tRNA + dimethylallyl diphosphate = N(6)-dimethylallyladenosine(37) in tRNA + diphosphate. Functionally, catalyzes the transfer of a dimethylallyl group onto the adenine at position 37 in tRNAs that read codons beginning with uridine, leading to the formation of N6-(dimethylallyl)adenosine (i(6)A). This Shigella flexneri protein is tRNA dimethylallyltransferase.